The chain runs to 598 residues: uncharacterized protein (598 aa).

Serine 46 carries the phosphoserine modification. The SAC domain maps to 106–441 (LQNHLKTGPF…ADYISLSYSG (336 aa)). 2 helical membrane passes run 508–528 (TIRC…MTLF) and 535–555 (ILPP…SLYY).

The protein localises to the endoplasmic reticulum membrane. This is an uncharacterized protein from Schizosaccharomyces pombe (strain 972 / ATCC 24843) (Fission yeast).